Reading from the N-terminus, the 485-residue chain is tRNA sulfurtransferase (485 aa).

In terms of domain architecture, THUMP spans 61–165; it reads EELIALLQRI…DDKMMLVKAR (105 aa). Residues 183–184, Lys-265, Gly-287, and Gln-296 each bind ATP; that span reads LI. Cysteines 344 and 456 form a disulfide. The 80-residue stretch at 404-483 folds into the Rhodanese domain; the sequence is LGENEVILDI…FSNVRVFAKN (80 aa). Residue Cys-456 is the Cysteine persulfide intermediate of the active site.

It belongs to the ThiI family.

It localises to the cytoplasm. The enzyme catalyses [ThiI sulfur-carrier protein]-S-sulfanyl-L-cysteine + a uridine in tRNA + 2 reduced [2Fe-2S]-[ferredoxin] + ATP + H(+) = [ThiI sulfur-carrier protein]-L-cysteine + a 4-thiouridine in tRNA + 2 oxidized [2Fe-2S]-[ferredoxin] + AMP + diphosphate. The catalysed reaction is [ThiS sulfur-carrier protein]-C-terminal Gly-Gly-AMP + S-sulfanyl-L-cysteinyl-[cysteine desulfurase] + AH2 = [ThiS sulfur-carrier protein]-C-terminal-Gly-aminoethanethioate + L-cysteinyl-[cysteine desulfurase] + A + AMP + 2 H(+). It functions in the pathway cofactor biosynthesis; thiamine diphosphate biosynthesis. Functionally, catalyzes the ATP-dependent transfer of a sulfur to tRNA to produce 4-thiouridine in position 8 of tRNAs, which functions as a near-UV photosensor. Also catalyzes the transfer of sulfur to the sulfur carrier protein ThiS, forming ThiS-thiocarboxylate. This is a step in the synthesis of thiazole, in the thiamine biosynthesis pathway. The sulfur is donated as persulfide by IscS. The sequence is that of tRNA sulfurtransferase from Haemophilus influenzae (strain PittGG).